Consider the following 165-residue polypeptide: Small ribosomal subunit protein uS5 (165 aa).

In terms of domain architecture, S5 DRBM spans 13–76 (LEEKVLVVNR…EAAKKNLMKI (64 aa)).

Belongs to the universal ribosomal protein uS5 family. In terms of assembly, part of the 30S ribosomal subunit. Contacts proteins S4 and S8.

Functionally, with S4 and S12 plays an important role in translational accuracy. Located at the back of the 30S subunit body where it stabilizes the conformation of the head with respect to the body. The protein is Small ribosomal subunit protein uS5 of Chlamydia pneumoniae (Chlamydophila pneumoniae).